We begin with the raw amino-acid sequence, 142 residues long: Large ribosomal subunit protein uL11 (142 aa).

This sequence belongs to the universal ribosomal protein uL11 family. In terms of assembly, part of the ribosomal stalk of the 50S ribosomal subunit. Interacts with L10 and the large rRNA to form the base of the stalk. L10 forms an elongated spine to which L12 dimers bind in a sequential fashion forming a multimeric L10(L12)X complex. Post-translationally, one or more lysine residues are methylated.

Its function is as follows. Forms part of the ribosomal stalk which helps the ribosome interact with GTP-bound translation factors. In Haemophilus influenzae (strain PittGG), this protein is Large ribosomal subunit protein uL11.